Reading from the N-terminus, the 209-residue chain is Orotate phosphoribosyltransferase (209 aa).

5-phospho-alpha-D-ribose 1-diphosphate contacts are provided by residues R96, K100, H102, and 122–130 (EDLISTGGS). Residue S126 participates in orotate binding.

This sequence belongs to the purine/pyrimidine phosphoribosyltransferase family. PyrE subfamily. In terms of assembly, homodimer. Requires Mg(2+) as cofactor.

It carries out the reaction orotidine 5'-phosphate + diphosphate = orotate + 5-phospho-alpha-D-ribose 1-diphosphate. The protein operates within pyrimidine metabolism; UMP biosynthesis via de novo pathway; UMP from orotate: step 1/2. Catalyzes the transfer of a ribosyl phosphate group from 5-phosphoribose 1-diphosphate to orotate, leading to the formation of orotidine monophosphate (OMP). The protein is Orotate phosphoribosyltransferase of Streptococcus gordonii (strain Challis / ATCC 35105 / BCRC 15272 / CH1 / DL1 / V288).